A 354-amino-acid chain; its full sequence is Divinyl chlorophyll a/b light-harvesting protein PcbG (354 aa).

Helical transmembrane passes span 27-47 (FIAA…ASTL), 65-85 (IFLA…VWTG), 88-108 (VASV…GALS), 201-221 (VLGG…FHIA), 241-261 (AVLS…AFWC), and 308-328 (LTNV…WHAI).

Belongs to the PsbB/PsbC family. IsiA/Pcb subfamily. As to quaternary structure, the antenna complex consists of divinyl chlorophylls (a and b) and divinyl chlorophyll a/b binding proteins and binds more divinyl chlorophyll b than does the antenna complex from high-light-adapted Prochlorococcus. Requires divinyl chlorophyll a as cofactor. Divinyl chlorophyll b is required as a cofactor.

The protein resides in the cellular thylakoid membrane. In terms of biological role, the antenna complex functions as a light receptor, it captures and delivers excitation energy to photosystems II and I. The Prochlorales pcb genes are not related to higher plant LHCs. The sequence is that of Divinyl chlorophyll a/b light-harvesting protein PcbG (pcbG) from Prochlorococcus marinus (strain NATL2A).